Consider the following 96-residue polypeptide: Probable quinol oxidase subunit 4 (96 aa).

The next 3 helical transmembrane spans lie at 8–28 (TVGFIASIVLTLLAVFVTLYT), 37–57 (TIIFGFAFIQAAVQLLMFMHL), and 68–88 (FKVIFAIIITLVTVIGTYWVM).

The protein belongs to the cytochrome c oxidase bacterial subunit 4 family.

Its subcellular location is the cell membrane. The enzyme catalyses 2 a quinol + O2 = 2 a quinone + 2 H2O. Its function is as follows. Catalyzes quinol oxidation with the concomitant reduction of oxygen to water. The polypeptide is Probable quinol oxidase subunit 4 (qoxD) (Staphylococcus haemolyticus (strain JCSC1435)).